The primary structure comprises 545 residues: MTLLTQSSTWQALSAHSKNVPHMRELFATDAARFNKMSLSACGLLLDYSKNKATAETLDLLFTLASNSQLEAKIKAMFAGEIINTTEKRAVLHTALRSTAEQSIIAEGQDIVPEVQQTLNKMQGFVSSVTSGQWKGYTGKAITDIVSIGIGGSFLGPKIVSQALRPYWNPELKCHFVANVDGTSISEKLKLLDPETTLFIMSSKSFGTQETLTNTLTAREWFLAKGGLQSDVAKHFVAVTSNIAKATDFGIDADNIFPMWDWVGGRYSLWSAIGLPIALLIGMDNFRALLSGAHQMDEHFANAPLTENMPVIMGLLSLWYGNFFNAQSHVVLTYDHYLRGLPAYFQQLDMESNGKSVTLNGTDVDYSTGPVIWGGEGTNGQHAYHQLLHQGTALIPADFIMPLQSHNPIGEHHDQLASNCFGQTQALMQGRTFDEALAELANSALSATEKQLIAKHKVMPGNKPSNTLLMDKLTPSTLGALIALYEHRTFVQGAIWDINSFDQWGVELGKDLGNDVLARIGATQDCDALDASSNALINLYRQGKI.

The active-site Proton donor is the glutamate 351. Residues histidine 382 and lysine 510 contribute to the active site.

The protein belongs to the GPI family.

It localises to the cytoplasm. It catalyses the reaction alpha-D-glucose 6-phosphate = beta-D-fructose 6-phosphate. Its pathway is carbohydrate biosynthesis; gluconeogenesis. The protein operates within carbohydrate degradation; glycolysis; D-glyceraldehyde 3-phosphate and glycerone phosphate from D-glucose: step 2/4. Functionally, catalyzes the reversible isomerization of glucose-6-phosphate to fructose-6-phosphate. The polypeptide is Glucose-6-phosphate isomerase (Shewanella baltica (strain OS185)).